A 136-amino-acid polypeptide reads, in one-letter code: Large ribosomal subunit protein uL16 (136 aa).

The protein belongs to the universal ribosomal protein uL16 family. In terms of assembly, part of the 50S ribosomal subunit.

Functionally, binds 23S rRNA and is also seen to make contacts with the A and possibly P site tRNAs. The protein is Large ribosomal subunit protein uL16 of Wigglesworthia glossinidia brevipalpis.